The primary structure comprises 230 residues: Cytidylate kinase (230 aa).

10-18 (GPAGSGKST) serves as a coordination point for ATP.

The protein belongs to the cytidylate kinase family. Type 1 subfamily.

It is found in the cytoplasm. The enzyme catalyses CMP + ATP = CDP + ADP. The catalysed reaction is dCMP + ATP = dCDP + ADP. The chain is Cytidylate kinase from Leptospira borgpetersenii serovar Hardjo-bovis (strain L550).